Here is a 229-residue protein sequence, read N- to C-terminus: Uracil-DNA glycosylase (229 aa).

D70 serves as the catalytic Proton acceptor.

Belongs to the uracil-DNA glycosylase (UDG) superfamily. UNG family.

It localises to the cytoplasm. The catalysed reaction is Hydrolyzes single-stranded DNA or mismatched double-stranded DNA and polynucleotides, releasing free uracil.. Its function is as follows. Excises uracil residues from the DNA which can arise as a result of misincorporation of dUMP residues by DNA polymerase or due to deamination of cytosine. This chain is Uracil-DNA glycosylase, found in Chlamydia felis (strain Fe/C-56) (Chlamydophila felis).